We begin with the raw amino-acid sequence, 861 residues long: MAHYPTRLKTRKTYSWVGRPLLDRKLHYQTYREMCVKTEGCSTEIHIQIGQFVLIEGDDDENPYVAKLLELFEDDSDPPPKKRARVQWFVRFCEVPACKRHLLGRKPGAQEIFWYDYPACDSNINAETIIGLVRVIPLAPKDVVPTNLKNEKTLFVKLSWNEKKFRPLSSELFAELNKPQESAAKCQKPVRAKSKSAESPSWTPAEHVAKRIESRHSASKSRQTPTHPLTPRARKRLELGNLGNPQMSQQTSCASLDSPGRIKRKVAFSEITSPSKRSQPDKLQTLSPALKAPEKTRETGLSYTEDDKKASPEHRIILRTRIAASKTIDIREERTLTPISGGQRSSVVPSVILKPENIKKRDAKEAKAQNEATSTPHRIRRKSSVLTMNRIRQQLRFLGNSKSDQEEKEILPAAEISDSSSDEEEASTPPLPRRAPRTVSRNLRSSLKSSLHTLTKVPKKSLKPRTPRCAAPQIRSRSLAAQEPASVLEEARLRLHVSAVPESLPCREQEFQDIYNFVESKLLDHTGGCMYISGVPGTGKTATVHEVIRCLQQAAQANDVPPFQYIEVNGMKLTEPHQVYVQILQKLTGQKATANHAAELLAKQFCTRGSPQETTVLLVDELDLLWTHKQDIMYNLFDWPTHKEARLVVLAIANTMDLPERIMMNRVSSRLGLTRMCFQPYTYSQLQQILRSRLKHLKAFEDDAIQLVARKVAALSGDARRCLDICRRATEICEFSQQKPDSPGLVTIAHSMEAVDEMFSSSYITAIKNSSVLEQSFLRAILAEFRRSGLEEATFQQIYSQHVALCRMEGLPYPTMSETMAVCSHLGSCRLLLVEPSRNDLLLRVRLNVSQDDVLYALKDE.

The region spanning 45 to 171 (IHIQIGQFVL…EKKFRPLSSE (127 aa)) is the BAH domain. Residues 183-233 (AAKCQKPVRAKSKSAESPSWTPAEHVAKRIESRHSASKSRQTPTHPLTPRA) are disordered. A Phosphoserine modification is found at serine 199. Residue threonine 203 is modified to Phosphothreonine. Residues 207–216 (HVAKRIESRH) show a composition bias toward basic and acidic residues. Phosphoserine is present on residues serine 252, serine 255, serine 273, and serine 287. Residues 269–312 (SEITSPSKRSQPDKLQTLSPALKAPEKTRETGLSYTEDDKKASP) are disordered. Polar residues predominate over residues 270–287 (EITSPSKRSQPDKLQTLS). N6-acetyllysine is present on lysine 326. Residue threonine 337 is modified to Phosphothreonine. At serine 340 the chain carries Phosphoserine. Disordered regions lie at residues 360-382 (KRDA…IRRK) and 412-476 (PAAE…QIRS). Residues serine 417 and serine 420 each carry the phosphoserine modification. The span at 440 to 456 (SRNLRSSLKSSLHTLTK) shows a compositional bias: low complexity. The segment covering 457–466 (VPKKSLKPRT) has biased composition (basic residues). Serine 478 carries the phosphoserine modification. ATP contacts are provided by residues valine 500 and 534-542 (GVPGTGKTA). Residues 501 to 861 (PESLPCREQE…DDVLYALKDE (361 aa)) form a necessary and sufficient for ORC complex assembly region. Positions 620 and 621 each coordinate Mg(2+). 3 residues coordinate ATP: glutamate 621, asparagine 654, and arginine 720.

It belongs to the ORC1 family. In terms of assembly, component of ORC, a complex composed of at least 6 subunits: ORC1, ORC2, ORC3, ORC4, ORC5 and ORC6. ORC is regulated in a cell-cycle dependent manner. It is sequentially assembled at the exit from anaphase of mitosis and disassembled as cells enter S phase. Interacts with CDC6 and KAT7/HBO1. Interacts with LRWD1 predominantly during the G1 phase and with less affinity during mitosis, when phosphorylated. Phosphorylated during mitosis.

The protein resides in the nucleus. Its function is as follows. Component of the origin recognition complex (ORC) that binds origins of replication. DNA-binding is ATP-dependent. The DNA sequences that define origins of replication have not been identified yet. ORC is required to assemble the pre-replication complex necessary to initiate DNA replication. This chain is Origin recognition complex subunit 1 (ORC1), found in Homo sapiens (Human).